The sequence spans 166 residues: Large ribosomal subunit protein uL10 (166 aa).

It belongs to the universal ribosomal protein uL10 family. In terms of assembly, part of the ribosomal stalk of the 50S ribosomal subunit. The N-terminus interacts with L11 and the large rRNA to form the base of the stalk. The C-terminus forms an elongated spine to which L12 dimers bind in a sequential fashion forming a multimeric L10(L12)X complex.

In terms of biological role, forms part of the ribosomal stalk, playing a central role in the interaction of the ribosome with GTP-bound translation factors. In Staphylococcus haemolyticus (strain JCSC1435), this protein is Large ribosomal subunit protein uL10.